The primary structure comprises 417 residues: D-inositol 3-phosphate glycosyltransferase (417 aa).

H10 serves as a coordination point for 1D-myo-inositol 3-phosphate. Residues 16-17 (QP) and G24 contribute to the UDP-N-acetyl-alpha-D-glucosamine site. 1D-myo-inositol 3-phosphate is bound by residues 21-26 (DAGGMN), K79, Y112, T136, and R156. Residues R230, K235, and Q296 each contribute to the UDP-N-acetyl-alpha-D-glucosamine site. Residues Y305, R306, and A308 each contribute to the Mg(2+) site. E318 and E326 together coordinate UDP-N-acetyl-alpha-D-glucosamine. T332 contacts Mg(2+).

The protein belongs to the glycosyltransferase group 1 family. MshA subfamily. Homodimer.

It catalyses the reaction 1D-myo-inositol 3-phosphate + UDP-N-acetyl-alpha-D-glucosamine = 1D-myo-inositol 2-acetamido-2-deoxy-alpha-D-glucopyranoside 3-phosphate + UDP + H(+). Functionally, catalyzes the transfer of a N-acetyl-glucosamine moiety to 1D-myo-inositol 3-phosphate to produce 1D-myo-inositol 2-acetamido-2-deoxy-glucopyranoside 3-phosphate in the mycothiol biosynthesis pathway. This Actinosynnema mirum (strain ATCC 29888 / DSM 43827 / JCM 3225 / NBRC 14064 / NCIMB 13271 / NRRL B-12336 / IMRU 3971 / 101) protein is D-inositol 3-phosphate glycosyltransferase.